The primary structure comprises 266 residues: Carboxy-S-adenosyl-L-methionine synthase (266 aa).

Residues M1 to D24 are disordered. Residues Y58, G83–S85, D108–N109, D136–I137, N151, and R218 contribute to the S-adenosyl-L-methionine site.

Belongs to the class I-like SAM-binding methyltransferase superfamily. Cx-SAM synthase family. As to quaternary structure, homodimer.

The enzyme catalyses prephenate + S-adenosyl-L-methionine = carboxy-S-adenosyl-L-methionine + 3-phenylpyruvate + H2O. Its function is as follows. Catalyzes the conversion of S-adenosyl-L-methionine (SAM) to carboxy-S-adenosyl-L-methionine (Cx-SAM). The protein is Carboxy-S-adenosyl-L-methionine synthase of Yersinia enterocolitica serotype O:8 / biotype 1B (strain NCTC 13174 / 8081).